Here is a 213-residue protein sequence, read N- to C-terminus: Orotate phosphoribosyltransferase (213 aa).

Lysine 26 contributes to the 5-phospho-alpha-D-ribose 1-diphosphate binding site. Residue 34-35 (FF) coordinates orotate. Residues 72-73 (YK), arginine 99, lysine 100, lysine 103, histidine 105, and 124-132 (DDVITAGTA) each bind 5-phospho-alpha-D-ribose 1-diphosphate. Orotate-binding residues include threonine 128 and arginine 156.

It belongs to the purine/pyrimidine phosphoribosyltransferase family. PyrE subfamily. As to quaternary structure, homodimer. Requires Mg(2+) as cofactor.

It catalyses the reaction orotidine 5'-phosphate + diphosphate = orotate + 5-phospho-alpha-D-ribose 1-diphosphate. The protein operates within pyrimidine metabolism; UMP biosynthesis via de novo pathway; UMP from orotate: step 1/2. Its function is as follows. Catalyzes the transfer of a ribosyl phosphate group from 5-phosphoribose 1-diphosphate to orotate, leading to the formation of orotidine monophosphate (OMP). The sequence is that of Orotate phosphoribosyltransferase from Pseudomonas syringae pv. tomato (strain ATCC BAA-871 / DC3000).